Consider the following 453-residue polypeptide: Putative folate transporter 2 (453 aa).

11 consecutive transmembrane segments (helical) span residues I41–F64, S76–T96, P108–L126, I132–V156, I176–E195, Y201–L220, F241–G260, S280–Y300, T312–L330, V346–I366, and L416–L437.

This sequence belongs to the major facilitator superfamily. Folate-biopterin transporter (TC 2.A.71) family.

The protein localises to the plastid. Its subcellular location is the apicoplast. The protein resides in the membrane. Putative folate transporter. Required for sporogony of malaria parasites and host switching. The chain is Putative folate transporter 2 from Plasmodium berghei (strain Anka).